A 415-amino-acid chain; its full sequence is Gamma-glutamyl phosphate reductase (415 aa).

This sequence belongs to the gamma-glutamyl phosphate reductase family.

It is found in the cytoplasm. The catalysed reaction is L-glutamate 5-semialdehyde + phosphate + NADP(+) = L-glutamyl 5-phosphate + NADPH + H(+). Its pathway is amino-acid biosynthesis; L-proline biosynthesis; L-glutamate 5-semialdehyde from L-glutamate: step 2/2. Functionally, catalyzes the NADPH-dependent reduction of L-glutamate 5-phosphate into L-glutamate 5-semialdehyde and phosphate. The product spontaneously undergoes cyclization to form 1-pyrroline-5-carboxylate. This chain is Gamma-glutamyl phosphate reductase, found in Bacillus cereus (strain ATCC 10987 / NRS 248).